The chain runs to 384 residues: SAGA complex subunit Spt3 (384 aa).

The protein belongs to the SPT3 family. As to quaternary structure, component of the Spt-Ada-Gcn5 acetyltransferase (SAGA) complex consisting of wda/Taf5L, Saf6, Taf9, Taf10b, Taf12, Ada1, Spt3, Spt7, Spt20, Sf3b3, Sf3b5, Nipped-A/Tra1, a histone acetyltransferase (HAT) module made up of Gcn5, Ada2b (Isoform B), Ada3 and Sgf29, and a deubiquitinase (DUB) module made up of not/nonstop, Sgf11 and e(y)2 tethered to SAGA by Atxn7. Taf5 and Taf10, which has partially redundant properties with Taf10b, may also be part of this complex.

It localises to the nucleus. The protein resides in the chromosome. Its function is as follows. Component of the transcription regulatory complex SAGA, a multiprotein complex that activates transcription by remodeling chromatin and mediating histone acetylation and deubiquitination. The SAGA complex predominantly acetylates histone H3. Required for oogenesis; involved in transcriptional activation. This is SAGA complex subunit Spt3 from Drosophila melanogaster (Fruit fly).